A 524-amino-acid chain; its full sequence is N-acetylgalactosamine-6-sulfatase (524 aa).

The first 27 residues, 1–27 (MTACSTAIRAQQLLLPVLSALGLLAAG), serve as a signal peptide directing secretion. A catalytic domain region spans residues 28–381 (APQPPNIVLL…PTMLQGHIID (354 aa)). Ca(2+) is bound by residues Asp-40, Asp-41, and Cys-80. Catalysis depends on Cys-80, which acts as the Nucleophile. At Cys-80 the chain carries 3-oxoalanine (Cys). Residue His-143 is part of the active site. Asn-205 is a glycosylation site (N-linked (GlcNAc...) asparagine). Positions 290 and 291 each coordinate Ca(2+). Cys-310 and Cys-421 form a disulfide bridge. Residue Asn-425 is glycosylated (N-linked (GlcNAc...) asparagine). 2 cysteine pairs are disulfide-bonded: Cys-491/Cys-520 and Cys-503/Cys-509.

Belongs to the sulfatase family. In terms of assembly, homodimer. It depends on Ca(2+) as a cofactor. Post-translationally, the conversion to 3-oxoalanine (also known as C-formylglycine, FGly), of a serine or cysteine residue in prokaryotes and of a cysteine residue in eukaryotes, is critical for catalytic activity.

The protein resides in the lysosome. It catalyses the reaction Hydrolysis of the 6-sulfate groups of the N-acetyl-D-galactosamine 6-sulfate units of chondroitin sulfate and of the D-galactose 6-sulfate units of keratan sulfate.. This Rattus norvegicus (Rat) protein is N-acetylgalactosamine-6-sulfatase (Galns).